Consider the following 227-residue polypeptide: MFS-type transporter FVEG_08288 (227 aa).

A helical transmembrane segment spans residues 8–28 (VFLTVLIAIASCSVYILNIAI). An N-linked (GlcNAc...) asparagine glycan is attached at asparagine 40. Helical transmembrane passes span 43 to 63 (TVGLAYMSTGIGYILSSMAGG), 100 to 120 (VANTLYPLSSLWFGWTMYYGV), 122 to 142 (FMVPISALFVFGFTLMLHFTL), 164 to 181 (FVRNILSCVGTIVAAPWM), and 188 to 208 (YMMTKLCIICLLLGSLGIWLI).

This sequence belongs to the major facilitator superfamily.

The protein localises to the membrane. MFS-type transporter; part of the Fusarium detoxification of benzoxazolinone cluster 1 (FDB1) involved in the degradation of benzoxazolinones produced by the host plant. Maize, wheat, and rye produce the 2 benzoxazinone phytoanticipins 2,4-dihy-droxy-7-methoxy-1,4-benzoxazin-3-one (DIMBOA) and 2,4-dihydroxy-1,4-benzoxazin-3-one (DIBOA) that, due to their inherent instability once released, spontaneously degrade to the more stable corresponding benzoxazolinones, 6-methoxy-2-benzoxazolinone (MBOA) and 2-benzoxazolinone (BOA), respectively. This Gibberella moniliformis (strain M3125 / FGSC 7600) (Maize ear and stalk rot fungus) protein is MFS-type transporter FVEG_08288.